Reading from the N-terminus, the 332-residue chain is Potassium channel subfamily K member 17 (332 aa).

At 1-20 (MYRPRARAAPEGRVRGCAVP) the chain is on the cytoplasmic side. Residues 21-43 (STVLLLLAYLAYLALGTGVFWTL) form a helical membrane-spanning segment. 2 N-linked (GlcNAc...) asparagine glycosylation sites follow: Asn-65 and Asn-94. Positions 106–124 (SFFFSVSTITTIGYGNLSP) form an intramembrane region, pore-forming. The K(+) site is built by Thr-116, Ile-117, Gly-118, and Tyr-119. The segment at 116–121 (TIGYGN) is selectivity filter 1. Residues 128–148 (AARLFCIFFALVGIPLNLVVL) form a helical membrane-spanning segment. Residues 149-179 (NRLGHLMQQGVNHWASRLGGTWQDPDKARWL) lie on the Cytoplasmic side of the membrane. A helical transmembrane segment spans residues 180-200 (AGSGALLSGLLLFLLLPPLLF). The pore-forming intramembrane region spans 211–230 (GFYFAFITLSTVGFGDYVIG). K(+) contacts are provided by Thr-221, Val-222, Gly-223, and Phe-224. The interval 221 to 226 (TVGFGD) is selectivity filter 2. The chain crosses the membrane as a helical span at residues 244 to 264 (MVSLWILFGMAWLALIIKLIL). The Cytoplasmic segment spans residues 265–332 (SQLETPGRVC…AHAAGCGKDS (68 aa)). Residues 287–312 (SQSWRQGPDREPESHSPQQGCYPEGP) are disordered.

It belongs to the two pore domain potassium channel (TC 1.A.1.8) family. As to quaternary structure, homodimer; disulfide-linked. Heterodimer with KCNK5 and KCNK16. Widely expressed. Highly expressed in aorta and coronary artery. Expressed in pancreas, in both endocrine (alpha, beta, gamma, delta, and epsilon) and exocrine (acinar and ductal) cells.

It is found in the cell membrane. The catalysed reaction is K(+)(in) = K(+)(out). It carries out the reaction Rb(+)(in) = Rb(+)(out). The enzyme catalyses Cs(+)(in) = Cs(+)(out). Inhibited by Ba(2+), quinidine, chloroform and halothane. Activated at alkaline pH. Activated by quinine and isoflurane. In terms of biological role, k(+) channel that conducts voltage-dependent outward rectifying currents upon membrane depolarization. Voltage sensing is coupled to K(+) electrochemical gradient in an 'ion flux gating' mode where outward but not inward ion flow opens the gate. Homo- and heterodimerizes to form functional channels with distinct regulatory and gating properties. Present in the cardiac conduction system where it may regulate action potential duration and beating frequency of cardiac myocytes. Permeable to other monovalent cations such as Rb(+) and Cs(+). The protein is Potassium channel subfamily K member 17 of Homo sapiens (Human).